Reading from the N-terminus, the 54-residue chain is UPF0235 protein in proC 3'region (54 aa).

Belongs to the UPF0235 family.

This Vibrio alginolyticus protein is UPF0235 protein in proC 3'region.